We begin with the raw amino-acid sequence, 467 residues long: Retinoic acid receptor RXR-alpha (467 aa).

Residues Met1–Ile112 form a disordered region. Residues Met1–Ile139 are modulating domain. A Glycyl lysine isopeptide (Lys-Gly) (interchain with G-Cter in SUMO2) cross-link involves residue Lys4. The span at Phe11 to Gly25 shows a compositional bias: polar residues. Phosphoserine occurs at positions 22 and 28. The segment covering Pro32–Leu52 has biased composition (low complexity). Polar residues predominate over residues Ser54–Ile63. Phosphoserine; by MAPK8 and MAPK9 is present on residues Ser61 and Ser75. Over residues Ser83–Thr109 the composition is skewed to polar residues. Position 87 is a phosphothreonine; by MAPK8 and MAPK9 (Thr87). Lys113 participates in a covalent cross-link: Glycyl lysine isopeptide (Lys-Gly) (interchain with G-Cter in SUMO). Ser134 carries the post-translational modification Phosphoserine. Cys140 and Cys143 together coordinate Zn(2+). The NR C4-type zinc finger occupies Cys140–Cys160. Positions Cys140 to Met205 form a DNA-binding region, nuclear receptor. Lys150 bears the N6-acetyllysine mark. Residues Cys157 and Cys160 each coordinate Zn(2+). The nuclear localization signal stretch occupies residues Lys165 to Lys170. The Zn(2+) site is built by Cys176, Cys182, Cys192, and Cys195. The NR C4-type zinc-finger motif lies at Cys176–Cys200. The segment at Lys206–Ser229 is hinge. Residues Gln211–Asn223 show a composition bias toward basic and acidic residues. Residues Gln211–Glu233 are disordered. The NR LBD domain maps to Asn232 to Pro463. Ser264 carries the phosphoserine modification. At Ser265 the chain carries Phosphoserine; by MAPK8 and MAPK9. Residues Arg321 and Ala332 each contribute to the 9-cis-retinoate site. All-trans-retinoate-binding residues include Arg321 and Ala332. Residues Arg353–Gly373 form a required for nuclear export region.

This sequence belongs to the nuclear hormone receptor family. NR2 subfamily. In terms of assembly, homodimer. Heterodimer with RARA; required for ligand-dependent retinoic acid receptor transcriptional activity. Heterodimer with PPARA (via the leucine-like zipper in the LBD); the interaction is required for PPARA transcriptional activity. Heterodimerizes with PPARG. Heterodimerizes (via NR LBD) with RARB. Heterodimerizes with NR1H4; the heterodimerization enhances the binding affinity for LXXLL motifs from coactivators. Interacts with coactivator NCO6. Interacts with coactivator NCO3. Interacts with coactivator FAM120B. Interacts with coactivator PELP1, SENP6, SFPQ, DNTTIP2 and RNF8. Interacts with PRMT2. Interacts with ASXL1. Interacts with BHLHE40/DEC1, BHLHE41/DEC2, NCOR1 and NCOR2. Interacts in a ligand-dependent fashion with MED1 and NCOA1. Interacts with VDR. Interacts with EP300; the interaction is decreased by 9-cis retinoic acid. Heterodimer (via C-terminus) with NR4A1 (via DNA-binding domain); the interaction is enhanced by 9-cis retinoic acid. NR4A1 competes with EP300 for interaction with RXRA and thereby attenuates EP300 mediated acetylation of RXRA. In the absence of hormonal ligand, interacts with TACC1. Interacts ith IGFBP3. Acetylated by EP300; acetylation enhances DNA binding and transcriptional activity. Post-translationally, phosphorylated on serine and threonine residues mainly in the N-terminal modulating domain. Constitutively phosphorylated on Ser-22 in the presence or absence of ligand. Under stress conditions, hyperphosphorylated by activated JNK on Ser-61, Ser-75, Thr-87 and Ser-265. Phosphorylated on Ser-28, in vitro, by PKA. This phosphorylation is required for repression of cAMP-mediated transcriptional activity of RARA. In terms of processing, ubiquitinated by UBR5, leading to its degradation: UBR5 specifically recognizes and binds ligand-bound RXRA when it is not associated with coactivators (NCOAs). In presence of NCOAs, the UBR5-degron is not accessible, preventing its ubiquitination and degradation. Sumoylation negatively regulates transcriptional activity. Desumoylated specifically by SENP6. Expressed in macrophages (at protein level).

It localises to the nucleus. It is found in the cytoplasm. The protein resides in the mitochondrion. Receptor for retinoic acid that acts as a transcription factor. Forms homo- or heterodimers with retinoic acid receptors (RARs) and binds to target response elements in response to their ligands, all-trans or 9-cis retinoic acid, to regulate gene expression in various biological processes. The RAR/RXR heterodimers bind to the retinoic acid response elements (RARE) composed of tandem 5'-AGGTCA-3' sites known as DR1-DR5 to regulate transcription. The high affinity ligand for retinoid X receptors (RXRs) is 9-cis retinoic acid. In the absence of ligand, the RXR-RAR heterodimers associate with a multiprotein complex containing transcription corepressors that induce histone deacetylation, chromatin condensation and transcriptional suppression. On ligand binding, the corepressors dissociate from the receptors and coactivators are recruited leading to transcriptional activation. Serves as a common heterodimeric partner for a number of nuclear receptors, such as RARA, RARB and PPARA. The RXRA/RARB heterodimer can act as a transcriptional repressor or transcriptional activator, depending on the RARE DNA element context. The RXRA/PPARA heterodimer is required for PPARA transcriptional activity on fatty acid oxidation genes such as ACOX1 and the P450 system genes. Together with RARA, positively regulates microRNA-10a expression, thereby inhibiting the GATA6/VCAM1 signaling response to pulsatile shear stress in vascular endothelial cells. Acts as an enhancer of RARA binding to RARE DNA element. May facilitate the nuclear import of heterodimerization partners such as VDR and NR4A1. Promotes myelin debris phagocytosis and remyelination by macrophages. Plays a role in the attenuation of the innate immune system in response to viral infections, possibly by negatively regulating the transcription of antiviral genes such as type I IFN genes. Involved in the regulation of calcium signaling by repressing ITPR2 gene expression, thereby controlling cellular senescence. The sequence is that of Retinoic acid receptor RXR-alpha (Rxra) from Mus musculus (Mouse).